Reading from the N-terminus, the 164-residue chain is Endoribonuclease YbeY (164 aa).

Positions 120, 124, and 130 each coordinate Zn(2+).

This sequence belongs to the endoribonuclease YbeY family. It depends on Zn(2+) as a cofactor.

It localises to the cytoplasm. Its function is as follows. Single strand-specific metallo-endoribonuclease involved in late-stage 70S ribosome quality control and in maturation of the 3' terminus of the 16S rRNA. The polypeptide is Endoribonuclease YbeY (Acidothermus cellulolyticus (strain ATCC 43068 / DSM 8971 / 11B)).